A 194-amino-acid polypeptide reads, in one-letter code: ATP-dependent Clp protease proteolytic subunit (194 aa).

Serine 99 acts as the Nucleophile in catalysis. Residue histidine 124 is part of the active site.

The protein belongs to the peptidase S14 family. In terms of assembly, fourteen ClpP subunits assemble into 2 heptameric rings which stack back to back to give a disk-like structure with a central cavity, resembling the structure of eukaryotic proteasomes.

It localises to the cytoplasm. The catalysed reaction is Hydrolysis of proteins to small peptides in the presence of ATP and magnesium. alpha-casein is the usual test substrate. In the absence of ATP, only oligopeptides shorter than five residues are hydrolyzed (such as succinyl-Leu-Tyr-|-NHMec, and Leu-Tyr-Leu-|-Tyr-Trp, in which cleavage of the -Tyr-|-Leu- and -Tyr-|-Trp bonds also occurs).. Functionally, cleaves peptides in various proteins in a process that requires ATP hydrolysis. Has a chymotrypsin-like activity. Plays a major role in the degradation of misfolded proteins. The sequence is that of ATP-dependent Clp protease proteolytic subunit from Clostridium perfringens (strain ATCC 13124 / DSM 756 / JCM 1290 / NCIMB 6125 / NCTC 8237 / Type A).